The chain runs to 400 residues: D(3) dopamine receptor (400 aa).

Residues 1–32 (MAPLSQLSGHLNYTCGVENSTGASQARPHAYY) are Extracellular-facing. N-linked (GlcNAc...) asparagine glycans are attached at residues N12 and N19. The helical transmembrane segment at 33-55 (ALSYCALILAIVFGNGLVCMAVL) threads the bilayer. At 56-65 (KERALQTTTN) the chain is on the cytoplasmic side. Residues 66–88 (YLVVSLAVADLLVATLVMPWVVY) traverse the membrane as a helical segment. Topologically, residues 89 to 104 (LEVTGGVWNFSRVCCD) are extracellular. N97 is a glycosylation site (N-linked (GlcNAc...) asparagine). Residues C103 and C181 are joined by a disulfide bond. The chain crosses the membrane as a helical span at residues 105-126 (VFVTLDVMMCTASILNLCAISI). The Cytoplasmic portion of the chain corresponds to 127–149 (DRYTAVVMPVHYQHGTGQSSCRR). The helical transmembrane segment at 150 to 170 (VTLMITAVWVLAFAVSCPLLF) threads the bilayer. Residues 171–187 (GFNTTGDPTVCSISNPD) lie on the Extracellular side of the membrane. The N-linked (GlcNAc...) asparagine glycan is linked to N173. The helical transmembrane segment at 188-209 (FVIYSSVVSFYLPFGVTVLVYA) threads the bilayer. Residues 210 to 329 (RIYVVLKQRR…VPLREKKATQ (120 aa)) are Cytoplasmic-facing. The chain crosses the membrane as a helical span at residues 330–351 (MVAIVLGAFIVCWLPFFLTHVL). Residues 352–366 (NTHCQTCHVSPELYS) lie on the Extracellular side of the membrane. The cysteines at positions 355 and 358 are disulfide-linked. The chain crosses the membrane as a helical span at residues 367–386 (ATTWLGYVNSALNPVIYTTF). The Cytoplasmic portion of the chain corresponds to 387–400 (NIEFRKAFLKILSC).

It belongs to the G-protein coupled receptor 1 family. Interacts with CLIC6. Interacts with GRK4. Interacts with PALM. Interacts with FLNA (via filamin repeat 21); increases PKA-mediated phosphorylation of FLNA. In terms of processing, phosphorylated by GRK4. Post-translationally, palmitoylated.

It is found in the cell membrane. In terms of biological role, dopamine receptor whose activity is mediated by G proteins which inhibit adenylyl cyclase. Promotes cell proliferation. In Chlorocebus aethiops (Green monkey), this protein is D(3) dopamine receptor (DRD3).